The sequence spans 525 residues: Acyl-CoA-binding domain-containing protein 5 (525 aa).

Positions 43–132 (HETRFEAAVK…MKKIIETMPM (90 aa)) constitute an ACB domain. An acyl-CoA-binding positions include 54-63 (IQSLPKNGSF), 74-78 (YSFYK), K100, and Y119. A disordered region spans residues 157–216 (RSSDITSDLDNVLTSTPNAKTVNGKAESSDSGAESEEEEAQEEVKGAEQSDNDKKMMKKS). Positions 158–177 (SSDITSDLDNVLTSTPNAKT) are enriched in polar residues. The stretch at 181 to 210 (KAESSDSGAESEEEEAQEEVKGAEQSDNDK) forms a coiled coil. Phosphoserine occurs at positions 184, 185, 187, 191, 206, 270, and 304. Over residues 198 to 216 (EEVKGAEQSDNDKKMMKKS) the composition is skewed to basic and acidic residues. The span at 367–376 (EVKHGGEDGR) shows a compositional bias: basic and acidic residues. Positions 367-433 (EVKHGGEDGR…ERWGSDRGSR (67 aa)) are disordered. Position 419 is a phosphoserine (S419). Positions 422-432 (DGERWGSDRGS) are enriched in basic and acidic residues. The stretch at 438–467 (EQIALVLMRLQEDMQNVLQRLQKLETLTAL) forms a coiled coil. Position 460 is an N6-acetyllysine (K460). A helical transmembrane segment spans residues 489–509 (WWPFEMSPGVLTFAIIWPFIA).

The protein belongs to the ATG37 family.

The protein localises to the peroxisome membrane. Its function is as follows. Acyl-CoA binding protein which acts as the peroxisome receptor for pexophagy but is dispensable for aggrephagy and nonselective autophagy. Binds medium- and long-chain acyl-CoA esters. This chain is Acyl-CoA-binding domain-containing protein 5 (ACBD5), found in Pongo abelii (Sumatran orangutan).